The sequence spans 521 residues: Small ribosomal subunit protein mL104 (rPPR9) (521 aa).

The N-terminal 59 residues, 1-59, are a transit peptide targeting the mitochondrion; that stretch reads MPPSLPSLQLRRLLLRSFISSSSVNTLQSQPRIISSKPLFSPLPPSRSSIFSTFPSRFF. PPR repeat units follow at residues 174 to 204, 210 to 240, 244 to 278, 279 to 313, 321 to 355, 356 to 390, 393 to 427, and 428 to 462; these read GGKTLESAIDRLVRAGRPKQVTDFFEKMEND, DKESLTLVVKKLCEKGHASIAEKMVKNTANE, DENICDLLISGWCIAEKLDEATRLAGEMSRGGFEI, GTKAYNMMLDCVCKLCRKKDPFKLQPEVEKVLLEM, NTETFNVLINNLCKIRRTEEAMTLFGRMGEWGCQP, DAETYLVLIRSLYQAARIGEGDEMIDKMKSAGYGE, NKKEYYGFLKILCGIERLEHAMSVFKSMKANGCKP, and GIKTYDLLMGKMCANNQLTRANGLYKEAAKKGIAV. The segment covering 480–495 has biased composition (basic and acidic residues); sequence EVDSNVKKRETLPEKT. The tract at residues 480–499 is disordered; the sequence is EVDSNVKKRETLPEKTARKK. The Nuclear localization signal signature appears at 486–503; that stretch reads KKRETLPEKTARKKKRLK.

Belongs to the PPR family. P subfamily. As to quaternary structure, interacts with NAP1;1 and TCP8. Able to bind mitochondrial RNA in vitro. Component of the mitochondrial ribosome small subunit. As to expression, expressed in root tips, lateral root primordia and leaf primordia. Highly detected in the mature pollen grains.

The protein resides in the mitochondrion matrix. The protein localises to the nucleus. Functionally, RNA-binding protein that functions in both mitochondrion and nucleus. In mitochondrion, it is associated with polysomes and may play a role in translation. Required during embryogenesis. In nucleus, might be involved in the regulation of its own gene expression. The chain is Small ribosomal subunit protein mL104 (rPPR9) (PNM1) from Arabidopsis thaliana (Mouse-ear cress).